Reading from the N-terminus, the 429-residue chain is Esterase/beta-lactamase LipL (429 aa).

Ser-88 functions as the Acyl-ester intermediate in the catalytic mechanism.

Belongs to the beta-lactamase family.

Its subcellular location is the secreted. It is found in the cell wall. It localises to the cell membrane. It catalyses the reaction a fatty acid ester + H2O = an aliphatic alcohol + a fatty acid + H(+). The enzyme catalyses an acetyl ester + H2O = an aliphatic alcohol + acetate + H(+). It carries out the reaction a butanoate ester + H2O = an aliphatic alcohol + butanoate + H(+). The catalysed reaction is an octanoate ester + H2O = an aliphatic alcohol + octanoate + H(+). It catalyses the reaction decanoate ester + H2O = decanoate + an aliphatic alcohol + H(+). The enzyme catalyses a dodecanoate ester + H2O = an aliphatic alcohol + dodecanoate + H(+). It carries out the reaction a tetradecanoate ester + H2O = an aliphatic alcohol + tetradecanoate + H(+). The catalysed reaction is hexadecanoate ester + H2O = an aliphatic alcohol + hexadecanoate + H(+). It catalyses the reaction octadecanoate ester + H2O = an aliphatic alcohol + octadecanoate + H(+). The enzyme catalyses a hexanoate ester + H2O = an aliphatic alcohol + hexanoate + H(+). It carries out the reaction a beta-lactam + H2O = a substituted beta-amino acid. Its activity is regulated as follows. Esterase and beta-lactamase activities are inhibited by the active site residue modifiers phenylmethanesulfonylflouride (PMSF) and diethylpyrocarbonate (DEPC). Its function is as follows. Shows both esterase and beta-lactamase activities, with a much higher activity against phenyl esters than against beta-lactams. Shows esterase activity against both long-chain and short-chain p-nitrophenol (pNP) esters, with a preference for shorter chain esters. Hydrolyzes substrates containing beta-lactam ring such as nitrocefin and ampicillin. Functions as an immunogen that activates both humoral and cell-mediated responses. This Mycobacterium tuberculosis (strain ATCC 25618 / H37Rv) protein is Esterase/beta-lactamase LipL.